The chain runs to 68 residues: Small ribosomal subunit protein bS21 (68 aa).

The tract at residues Tyr-36 to Arg-68 is disordered. Basic and acidic residues predominate over residues Glu-37–Ala-49. Positions Ala-50–Arg-59 are enriched in basic residues.

The protein belongs to the bacterial ribosomal protein bS21 family.

The protein is Small ribosomal subunit protein bS21 of Zymomonas mobilis subsp. mobilis (strain ATCC 31821 / ZM4 / CP4).